The sequence spans 574 residues: Type II methyltransferase M.PaeR7I (574 aa).

Belongs to the N(4)/N(6)-methyltransferase family. Monomer.

It carries out the reaction a 2'-deoxyadenosine in DNA + S-adenosyl-L-methionine = an N(6)-methyl-2'-deoxyadenosine in DNA + S-adenosyl-L-homocysteine + H(+). Its function is as follows. A gamma subtype methylase, recognizes the double-stranded sequence 5'-CTCGAG-3', methylates A-5 on both strands, and protects the DNA from cleavage by the PaeR7I endonuclease. This chain is Type II methyltransferase M.PaeR7I (paeR7IM), found in Pseudomonas aeruginosa.